We begin with the raw amino-acid sequence, 362 residues long: Phosphoserine aminotransferase (362 aa).

Ser-9 and Arg-42 together coordinate L-glutamate. Residues 76–77, Trp-102, Thr-153, Asp-174, and Gln-197 contribute to the pyridoxal 5'-phosphate site; that span reads GR. Lys-198 is modified (N6-(pyridoxal phosphate)lysine). 239-240 contacts pyridoxal 5'-phosphate; it reads NT.

This sequence belongs to the class-V pyridoxal-phosphate-dependent aminotransferase family. SerC subfamily. In terms of assembly, homodimer. The cofactor is pyridoxal 5'-phosphate.

It localises to the cytoplasm. It carries out the reaction O-phospho-L-serine + 2-oxoglutarate = 3-phosphooxypyruvate + L-glutamate. The catalysed reaction is 4-(phosphooxy)-L-threonine + 2-oxoglutarate = (R)-3-hydroxy-2-oxo-4-phosphooxybutanoate + L-glutamate. It participates in amino-acid biosynthesis; L-serine biosynthesis; L-serine from 3-phospho-D-glycerate: step 2/3. The protein operates within cofactor biosynthesis; pyridoxine 5'-phosphate biosynthesis; pyridoxine 5'-phosphate from D-erythrose 4-phosphate: step 3/5. Functionally, catalyzes the reversible conversion of 3-phosphohydroxypyruvate to phosphoserine and of 3-hydroxy-2-oxo-4-phosphonooxybutanoate to phosphohydroxythreonine. This is Phosphoserine aminotransferase from Escherichia coli O139:H28 (strain E24377A / ETEC).